We begin with the raw amino-acid sequence, 690 residues long: Glycine--tRNA ligase beta subunit (690 aa).

It belongs to the class-II aminoacyl-tRNA synthetase family. As to quaternary structure, tetramer of two alpha and two beta subunits.

Its subcellular location is the cytoplasm. It catalyses the reaction tRNA(Gly) + glycine + ATP = glycyl-tRNA(Gly) + AMP + diphosphate. The sequence is that of Glycine--tRNA ligase beta subunit from Buchnera aphidicola subsp. Acyrthosiphon pisum (strain 5A).